The following is a 143-amino-acid chain: uncharacterized protein (143 aa).

It belongs to the SufE family.

This is an uncharacterized protein from Mycobacterium tuberculosis (strain CDC 1551 / Oshkosh).